A 251-amino-acid chain; its full sequence is Triosephosphate isomerase (251 aa).

9–11 (NWK) lines the substrate pocket. The active-site Electrophile is His-95. Catalysis depends on Glu-167, which acts as the Proton acceptor. Residues Gly-173, Ser-213, and 234–235 (GG) contribute to the substrate site.

It belongs to the triosephosphate isomerase family. Homodimer.

The protein resides in the cytoplasm. The catalysed reaction is D-glyceraldehyde 3-phosphate = dihydroxyacetone phosphate. It functions in the pathway carbohydrate biosynthesis; gluconeogenesis. The protein operates within carbohydrate degradation; glycolysis; D-glyceraldehyde 3-phosphate from glycerone phosphate: step 1/1. Functionally, involved in the gluconeogenesis. Catalyzes stereospecifically the conversion of dihydroxyacetone phosphate (DHAP) to D-glyceraldehyde-3-phosphate (G3P). This chain is Triosephosphate isomerase, found in Geotalea uraniireducens (strain Rf4) (Geobacter uraniireducens).